A 382-amino-acid polypeptide reads, in one-letter code: Gap junction alpha-1 protein (382 aa).

At 2–23 (GDWSALGKLLDKVQAYSTAGGK) the chain is on the cytoplasmic side. Position 5 is a phosphoserine (S5). The chain crosses the membrane as a helical span at residues 24–44 (VWLSVLFIFRILLLGTAVESA). The Extracellular segment spans residues 45-76 (WGDEQSAFRCNTQQPGCENVCYDKSFPISHVR). Cystine bridges form between C54-C192 and C187-C198. The chain crosses the membrane as a helical span at residues 77–97 (FWVLQIIFVSVPTLLYLAHVF). The Cytoplasmic portion of the chain corresponds to 98–155 (YVMRKEEKLNKKEEELKVAQTDGVNVDMHLKQIEIKKFKYGIEEHGKVKMRGGLLRTY). K144 participates in a covalent cross-link: Glycyl lysine isopeptide (Lys-Gly) (interchain with G-Cter in SUMO). The chain crosses the membrane as a helical span at residues 156 to 176 (IISILFKSIFEVAFLLIQWYI). Topologically, residues 177 to 207 (YGFSLSAVYTCKRDPCPHQVDCFLSRPTEKT) are extracellular. A helical membrane pass occupies residues 208-228 (IFIIFMLVVSLVSLALNIIEL). Topologically, residues 229–382 (FYVFFKGVKD…SRPRPDDLEI (154 aa)) are cytoplasmic. K237 is covalently cross-linked (Glycyl lysine isopeptide (Lys-Gly) (interchain with G-Cter in SUMO)). The tract at residues 244–382 (SDPYHATSGA…SRPRPDDLEI (139 aa)) is interaction with NOV. Y247 is subject to Phosphotyrosine. Phosphoserine is present on residues S255 and S262. Residues 264–382 (KYAYFNGCSS…SRPRPDDLEI (119 aa)) are interaction with UBQLN4. C271 carries the post-translational modification S-nitrosocysteine. Position 275 is a phosphothreonine (T275). 2 positions are modified to phosphoserine: S306 and S314. The span at 317 to 332 (QNRMGQAGSTISNSHA) shows a compositional bias: polar residues. Positions 317–382 (QNRMGQAGST…SRPRPDDLEI (66 aa)) are disordered. Position 325 is a phosphoserine; by CK1 (S325). T326 is subject to Phosphothreonine. Phosphoserine; by CK1 is present on residues S328 and S330. Residues S344 and S365 each carry the phosphoserine modification. The segment covering 362 to 374 (RPSSRASSRASSR) has biased composition (low complexity). A Phosphoserine; by PKC/PRKCG and PKC/PRKCD modification is found at S368. Phosphoserine occurs at positions 369 and 373.

Belongs to the connexin family. Alpha-type (group II) subfamily. A connexon is composed of a hexamer of connexins. Interacts (via C-terminus) with TJP1. Interacts (via C-terminus) with SRC (via SH3 domain). Interacts (not ubiquitinated) with UBQLN4 (via UBA domain). Interacts with SGSM3 and CNST. Interacts with RIC1/CIP150. Interacts with CSNK1D. Interacts with NOV. Interacts with TMEM65. Interacts with ANK3/ANKG and PKP2. Post-translationally, phosphorylated at Ser-368 by PRKCG; phosphorylation induces disassembly of gap junction plaques and inhibition of gap junction activity. Phosphorylation at Ser-325, Ser-328 and Ser-330 by CK1 modulates gap junction assembly. Phosphorylation at Ser-368 by PRKCD triggers its internalization into small vesicles leading to proteasome-mediated degradation. In terms of processing, sumoylated with SUMO1, SUMO2 and SUMO3, which may regulate the level of functional Cx43 gap junctions at the plasma membrane. May be desumoylated by SENP1 or SENP2. S-nitrosylation at Cys-271 is enriched at the muscle endothelial gap junction in arteries, it augments channel permeability and may regulate of smooth muscle cell to endothelial cell communication. Post-translationally, acetylated in the developing cortex; leading to delocalization from the cell membrane. In terms of tissue distribution, expressed at intercalated disks in the heart (at protein level). Expressed in the fetal cochlea.

The protein localises to the cell membrane. It localises to the cell junction. Its subcellular location is the gap junction. The protein resides in the endoplasmic reticulum. In terms of biological role, gap junction protein that acts as a regulator of bladder capacity. A gap junction consists of a cluster of closely packed pairs of transmembrane channels, the connexons, through which materials of low MW diffuse from one cell to a neighboring cell. May play a critical role in the physiology of hearing by participating in the recycling of potassium to the cochlear endolymph. Negative regulator of bladder functional capacity: acts by enhancing intercellular electrical and chemical transmission, thus sensitizing bladder muscles to cholinergic neural stimuli and causing them to contract. May play a role in cell growth inhibition through the regulation of NOV expression and localization. Plays an essential role in gap junction communication in the ventricles. The chain is Gap junction alpha-1 protein (GJA1) from Homo sapiens (Human).